We begin with the raw amino-acid sequence, 115 residues long: NAD(P)H-quinone oxidoreductase subunit M (115 aa).

The protein belongs to the complex I NdhM subunit family. As to quaternary structure, NDH-1 can be composed of about 15 different subunits; different subcomplexes with different compositions have been identified which probably have different functions.

It is found in the cellular thylakoid membrane. It catalyses the reaction a plastoquinone + NADH + (n+1) H(+)(in) = a plastoquinol + NAD(+) + n H(+)(out). The catalysed reaction is a plastoquinone + NADPH + (n+1) H(+)(in) = a plastoquinol + NADP(+) + n H(+)(out). NDH-1 shuttles electrons from an unknown electron donor, via FMN and iron-sulfur (Fe-S) centers, to quinones in the respiratory and/or the photosynthetic chain. The immediate electron acceptor for the enzyme in this species is believed to be plastoquinone. Couples the redox reaction to proton translocation, and thus conserves the redox energy in a proton gradient. Cyanobacterial NDH-1 also plays a role in inorganic carbon-concentration. The polypeptide is NAD(P)H-quinone oxidoreductase subunit M (Prochlorococcus marinus (strain MIT 9303)).